We begin with the raw amino-acid sequence, 136 residues long: Evasin P991 (136 aa).

Residues 1 to 28 form the signal peptide; that stretch reads MHSTIVYACLLALAVFVALHGTPLAALA. Residues asparagine 41, asparagine 61, asparagine 64, asparagine 78, asparagine 92, asparagine 100, and asparagine 122 are each glycosylated (N-linked (GlcNAc...) asparagine). 4 cysteine pairs are disulfide-bonded: cysteine 55/cysteine 77, cysteine 73/cysteine 114, cysteine 90/cysteine 119, and cysteine 109/cysteine 128.

The protein resides in the secreted. Its function is as follows. Salivary chemokine-binding protein which has chemokine-neutralizing activity and binds to host chemokines CCL2, CCL3, CCL3L1, CCL4, CCL4L1, CCL5, CCL6, CCL7, CCL8, CCL9, CCL11, CCL12, CCL13, CCL14, CCL16, CCL17, CCL18, CCL19, CCL22, CCL23, CCL24 and CCL27. This chain is Evasin P991, found in Amblyomma cajennense (Cayenne tick).